The following is a 328-amino-acid chain: Stress response kinase A (328 aa).

The Proton acceptor role is filled by Asp201. Residues Asn206 and Asp217 each coordinate Mg(2+). The active site involves Asp217.

This sequence belongs to the SrkA/RdoA protein kinase family. As to quaternary structure, monomer. Mg(2+) is required as a cofactor.

It localises to the cytoplasm. It carries out the reaction L-seryl-[protein] + ATP = O-phospho-L-seryl-[protein] + ADP + H(+). It catalyses the reaction L-threonyl-[protein] + ATP = O-phospho-L-threonyl-[protein] + ADP + H(+). Its function is as follows. A protein kinase that phosphorylates Ser and Thr residues. Probably acts to suppress the effects of stress linked to accumulation of reactive oxygen species. Probably involved in the extracytoplasmic stress response. The sequence is that of Stress response kinase A from Salmonella choleraesuis (strain SC-B67).